The following is a 381-amino-acid chain: Creatine kinase M-type (381 aa).

Residues lysine 11 to glycine 98 enclose the Phosphagen kinase N-terminal domain. The interval glycine 99–glycine 118 is disordered. The region spanning tyrosine 125–leucine 367 is the Phosphagen kinase C-terminal domain. ATP-binding positions include serine 128–arginine 132, histidine 191, arginine 236, arginine 292, arginine 320–valine 325, and aspartate 335.

This sequence belongs to the ATP:guanido phosphotransferase family. Dimer of identical or non-identical chains, which can be either B (brain type) or M (muscle type). With MM being the major form in skeletal muscle and myocardium, MB existing in myocardium, and BB existing in many tissues, especially brain. In terms of tissue distribution, predominantly found in skeletal muscle, but not in the heart.

The protein localises to the cytoplasm. It catalyses the reaction creatine + ATP = N-phosphocreatine + ADP + H(+). Functionally, reversibly catalyzes the transfer of phosphate between ATP and various phosphogens (e.g. creatine phosphate). Creatine kinase isoenzymes play a central role in energy transduction in tissues with large, fluctuating energy demands, such as skeletal muscle, heart, brain and spermatozoa. The polypeptide is Creatine kinase M-type (Gallus gallus (Chicken)).